Consider the following 437-residue polypeptide: Succinate--CoA ligase [ADP-forming] subunit beta, hydrogenosomal (437 aa).

The transit peptide at 1-27 directs the protein to the hydrogenosome; that stretch reads MLANVTRSTSKAAPALASIAQTAQKRF. An ATP-grasp domain is found at 36 to 278; the sequence is MNLLHEYNVN…TTQEDPREVA (243 aa). ATP contacts are provided by residues Lys73, 80–82, and Glu141; that span reads GRG. Mg(2+)-binding residues include Asn233 and Asp247. Substrate contacts are provided by residues Asn299 and 356 to 358; that span reads GIM.

It belongs to the succinate/malate CoA ligase beta subunit family. In terms of assembly, heterodimer of an alpha and a beta subunit. Requires Mg(2+) as cofactor.

Its subcellular location is the hydrogenosome. It carries out the reaction succinate + ATP + CoA = succinyl-CoA + ADP + phosphate. The protein operates within carbohydrate metabolism; tricarboxylic acid cycle; succinate from succinyl-CoA (ligase route): step 1/1. In terms of biological role, succinyl-CoA synthetase functions in the citric acid cycle (TCA), coupling the hydrolysis of succinyl-CoA to the synthesis of ATP and thus represents the only step of substrate-level phosphorylation in the TCA. The beta subunit provides nucleotide specificity of the enzyme and binds the substrate succinate, while the binding sites for coenzyme A and phosphate are found in the alpha subunit. The protein is Succinate--CoA ligase [ADP-forming] subunit beta, hydrogenosomal of Neocallimastix frontalis (Rumen fungus).